A 1479-amino-acid chain; its full sequence is C-type mannose receptor 2 (1479 aa).

Residues 1-30 form the signal peptide; it reads MGPGRPAPAPWPRHLLRCVLLLGCLHLGRP. Over 31–1414 the chain is Extracellular; it reads GAPGDAALPE…PSALPENPAA (1384 aa). The Ricin B-type lectin domain occupies 41 to 167; it reads PNVFLIFSHG…WRIYGSEEDL (127 aa). A disulfide bridge connects residues Cys54 and Cys68. Residue Asn69 is glycosylated (N-linked (GlcNAc...) (complex) asparagine). Cys93 and Cys112 form a disulfide bridge. N-linked (GlcNAc...) asparagine glycosylation occurs at Asn140. Residues 182 to 230 form the Fibronectin type-II domain; sequence SHGKPCTIPFKYDNQWFHGCTSTGREDGHLWCATTQDYGKDERWGFCPI. 4 cysteine pairs are disulfide-bonded: Cys187–Cys213, Cys201–Cys228, Cys266–Cys359, and Cys335–Cys351. Positions 244 to 360 constitute a C-type lectin 1 domain; the sequence is LTDSCYQFNF…CSIALPYVCK (117 aa). The N-linked (GlcNAc...) asparagine glycan is linked to Asn364. C-type lectin domains are found at residues 389–505, 528–644, 678–809, and 832–951; these read FQGH…SICK, HSPS…RYIC, KLRY…WICK, and FQEA…YICK. 2 disulfide bridges follow: Cys410–Cys504 and Cys481–Cys496. A glycan (N-linked (GlcNAc...) asparagine) is linked at Asn588. Intrachain disulfides connect Cys618/Cys635, Cys704/Cys808, Cys785/Cys800, Cys853/Cys950, and Cys927/Cys942. N-linked (GlcNAc...) asparagine glycosylation is found at Asn954 and Asn1029. 3 C-type lectin domains span residues 979 to 1107, 1132 to 1243, and 1273 to 1393; these read FLNK…GFIC, YLNG…GAVC, and FREH…GVVC. Cys1078 and Cys1098 form a disulfide bridge. A Glycyl lysine isopeptide (Lys-Gly) (interchain with G-Cter in SUMO1) cross-link involves residue Lys1142. The cysteines at positions 1220 and 1234 are disulfide-linked. N-linked (GlcNAc...) asparagine glycosylation is present at Asn1350. A disulfide bond links Cys1369 and Cys1384. A helical membrane pass occupies residues 1415 to 1435; it reads LVVVLMAVLLLLALLTAALIL. At 1436 to 1479 the chain is on the cytoplasmic side; it reads YRRRQSIERGAFEGARYSRSSSSPTEATEKNILVSDMEMNEQQE. Residues 1450–1479 form a disordered region; it reads ARYSRSSSSPTEATEKNILVSDMEMNEQQE.

In terms of assembly, interacts with C-terminal region of type I collagen/COL1A1. Interacts directly with PLAUR/UPAR and PLAU/pro-UPA to form a tri-molecular complex. Interacts with collagen V. Post-translationally, N-glycosylated. In terms of tissue distribution, ubiquitous with low expression in brain, placenta, lung, kidney, pancreas, spleen, thymus and colon. Expressed in endothelial cells, fibroblasts and macrophages. Highly expressed in fetal lung and kidney.

Its subcellular location is the membrane. May play a role as endocytotic lectin receptor displaying calcium-dependent lectin activity. Internalizes glycosylated ligands from the extracellular space for release in an endosomal compartment via clathrin-mediated endocytosis. May be involved in plasminogen activation system controlling the extracellular level of PLAUR/PLAU, and thus may regulate protease activity at the cell surface. May contribute to cellular uptake, remodeling and degradation of extracellular collagen matrices. May play a role during cancer progression as well as in other chronic tissue destructive diseases acting on collagen turnover. May participate in remodeling of extracellular matrix cooperating with the matrix metalloproteinases (MMPs). The polypeptide is C-type mannose receptor 2 (MRC2) (Homo sapiens (Human)).